Here is a 275-residue protein sequence, read N- to C-terminus: 4-deoxy-L-threo-5-hexosulose-uronate ketol-isomerase (275 aa).

The Zn(2+) site is built by His-193, His-195, Glu-200, and His-242.

It belongs to the KduI family. Zn(2+) is required as a cofactor.

It catalyses the reaction 5-dehydro-4-deoxy-D-glucuronate = 3-deoxy-D-glycero-2,5-hexodiulosonate. It participates in glycan metabolism; pectin degradation; 2-dehydro-3-deoxy-D-gluconate from pectin: step 4/5. In terms of biological role, catalyzes the isomerization of 5-dehydro-4-deoxy-D-glucuronate to 3-deoxy-D-glycero-2,5-hexodiulosonate. The protein is 4-deoxy-L-threo-5-hexosulose-uronate ketol-isomerase of Bacillus licheniformis (strain ATCC 14580 / DSM 13 / JCM 2505 / CCUG 7422 / NBRC 12200 / NCIMB 9375 / NCTC 10341 / NRRL NRS-1264 / Gibson 46).